The following is a 149-amino-acid chain: Nucleoside diphosphate kinase (149 aa).

Lys-9, Phe-57, Arg-85, Thr-91, Arg-102, and Asn-112 together coordinate ATP. Catalysis depends on His-115, which acts as the Pros-phosphohistidine intermediate.

The protein belongs to the NDK family. In terms of assembly, homotetramer. The cofactor is Mg(2+).

Its subcellular location is the cytoplasm. It carries out the reaction a 2'-deoxyribonucleoside 5'-diphosphate + ATP = a 2'-deoxyribonucleoside 5'-triphosphate + ADP. The catalysed reaction is a ribonucleoside 5'-diphosphate + ATP = a ribonucleoside 5'-triphosphate + ADP. In terms of biological role, major role in the synthesis of nucleoside triphosphates other than ATP. The ATP gamma phosphate is transferred to the NDP beta phosphate via a ping-pong mechanism, using a phosphorylated active-site intermediate. This Staphylococcus saprophyticus subsp. saprophyticus (strain ATCC 15305 / DSM 20229 / NCIMB 8711 / NCTC 7292 / S-41) protein is Nucleoside diphosphate kinase.